The sequence spans 84 residues: Large ribosomal subunit protein bL31B (84 aa).

Belongs to the bacterial ribosomal protein bL31 family. Type B subfamily. In terms of assembly, part of the 50S ribosomal subunit.

The chain is Large ribosomal subunit protein bL31B from Streptomyces griseus subsp. griseus (strain JCM 4626 / CBS 651.72 / NBRC 13350 / KCC S-0626 / ISP 5235).